Reading from the N-terminus, the 217-residue chain is Small ribosomal subunit protein uS3 (217 aa).

Residues 24–93 (IKEFLEYKLS…NPQIDVIDVS (70 aa)) form the KH type-2 domain.

Belongs to the universal ribosomal protein uS3 family. As to quaternary structure, part of the 30S ribosomal subunit.

Binds the lower part of the 30S subunit head. The sequence is that of Small ribosomal subunit protein uS3 from Pyrobaculum islandicum (strain DSM 4184 / JCM 9189 / GEO3).